The following is a 374-amino-acid chain: Lipopolysaccharide glucosyltransferase WaaG (374 aa).

UDP-alpha-D-glucose is bound by residues G15 and D19. The tract at residues Y103–F132 is membrane-interacting region. UDP-alpha-D-glucose-binding residues include R173, R208, K209, R261, E281, A283, G284, I285, V286, and E289.

Belongs to the glycosyltransferase group 1 family. Glycosyltransferase 4 subfamily.

The protein localises to the cell inner membrane. Its pathway is bacterial outer membrane biogenesis; LPS core biosynthesis. With respect to regulation, inhibited by divalent metal ions such as Mg(2+), Mn(2+), Ca(2+), Zn(2+), Co(2+), Ni(2+) and Cu(2+). Functionally, glucosyltransferase involved in the biosynthesis of the core oligosaccharide region of lipopolysaccharide (LPS). Catalyzes the addition of the first outer-core glucose from UDP-glucose to the inner-core heptose II. Cannot use other sugar donors, such as UDP-galactose, UDP-glucuronic acid, UDP-galacuronic acid, GDP-mannose, ADP-glucose and GDP-glucose. In the absence of a lipid acceptor, can slowly hydrolyze UDP-glucose. The chain is Lipopolysaccharide glucosyltransferase WaaG from Escherichia coli (strain K12).